A 221-amino-acid chain; its full sequence is Octanoyltransferase (221 aa).

The 183-residue stretch at 31–213 (DKSADEIWLV…HFVTILGYNK (183 aa)) folds into the BPL/LPL catalytic domain. Substrate contacts are provided by residues 70–77 (RGGQITYH), 142–144 (SLG), and 155–157 (GLA). The active-site Acyl-thioester intermediate is the Cys-173.

It belongs to the LipB family.

It is found in the cytoplasm. It carries out the reaction octanoyl-[ACP] + L-lysyl-[protein] = N(6)-octanoyl-L-lysyl-[protein] + holo-[ACP] + H(+). It functions in the pathway protein modification; protein lipoylation via endogenous pathway; protein N(6)-(lipoyl)lysine from octanoyl-[acyl-carrier-protein]: step 1/2. Its function is as follows. Catalyzes the transfer of endogenously produced octanoic acid from octanoyl-acyl-carrier-protein onto the lipoyl domains of lipoate-dependent enzymes. Lipoyl-ACP can also act as a substrate although octanoyl-ACP is likely to be the physiological substrate. The polypeptide is Octanoyltransferase (Mannheimia succiniciproducens (strain KCTC 0769BP / MBEL55E)).